Here is a 198-residue protein sequence, read N- to C-terminus: dTTP/UTP pyrophosphatase (198 aa).

Asp75 serves as the catalytic Proton acceptor.

Belongs to the Maf family. YhdE subfamily. A divalent metal cation serves as cofactor.

It is found in the cytoplasm. It carries out the reaction dTTP + H2O = dTMP + diphosphate + H(+). The catalysed reaction is UTP + H2O = UMP + diphosphate + H(+). Its function is as follows. Nucleoside triphosphate pyrophosphatase that hydrolyzes dTTP and UTP. May have a dual role in cell division arrest and in preventing the incorporation of modified nucleotides into cellular nucleic acids. The polypeptide is dTTP/UTP pyrophosphatase (Wolbachia pipientis wMel).